Consider the following 1403-residue polypeptide: DNA-directed RNA polymerase subunit beta' (1403 aa).

Zn(2+)-binding residues include C69, C71, C84, and C87. Positions 461, 463, and 465 each coordinate Mg(2+). 4 residues coordinate Zn(2+): C818, C891, C898, and C901. The tract at residues 1384–1403 is disordered; the sequence is LELLRNEGEDETGNEELVAE. Residues 1391–1403 show a composition bias toward acidic residues; the sequence is GEDETGNEELVAE.

Belongs to the RNA polymerase beta' chain family. The RNAP catalytic core consists of 2 alpha, 1 beta, 1 beta' and 1 omega subunit. When a sigma factor is associated with the core the holoenzyme is formed, which can initiate transcription. It depends on Mg(2+) as a cofactor. Requires Zn(2+) as cofactor.

It catalyses the reaction RNA(n) + a ribonucleoside 5'-triphosphate = RNA(n+1) + diphosphate. In terms of biological role, DNA-dependent RNA polymerase catalyzes the transcription of DNA into RNA using the four ribonucleoside triphosphates as substrates. This is DNA-directed RNA polymerase subunit beta' from Koribacter versatilis (strain Ellin345).